The chain runs to 132 residues: Small ribosomal subunit protein uS8 (132 aa).

Belongs to the universal ribosomal protein uS8 family. Part of the 30S ribosomal subunit. Contacts proteins S5 and S12.

One of the primary rRNA binding proteins, it binds directly to 16S rRNA central domain where it helps coordinate assembly of the platform of the 30S subunit. The polypeptide is Small ribosomal subunit protein uS8 (Ureaplasma urealyticum serovar 10 (strain ATCC 33699 / Western)).